The sequence spans 74 residues: ATP synthase subunit 9, mitochondrial (74 aa).

2 consecutive transmembrane segments (helical) span residues 12 to 32 and 50 to 70; these read LATI…AALI and ILGF…AFLL.

This sequence belongs to the ATPase C chain family. As to quaternary structure, F-type ATPases have 2 components, CF(1) - the catalytic core - and CF(0) - the membrane proton channel. CF(1) has five subunits: alpha(3), beta(3), gamma(1), delta(1), epsilon(1). CF(0) has three main subunits: a, b and c.

The protein localises to the mitochondrion membrane. Its function is as follows. Mitochondrial membrane ATP synthase (F(1)F(0) ATP synthase or Complex V) produces ATP from ADP in the presence of a proton gradient across the membrane which is generated by electron transport complexes of the respiratory chain. F-type ATPases consist of two structural domains, F(1) - containing the extramembraneous catalytic core and F(0) - containing the membrane proton channel, linked together by a central stalk and a peripheral stalk. During catalysis, ATP synthesis in the catalytic domain of F(1) is coupled via a rotary mechanism of the central stalk subunits to proton translocation. Part of the complex F(0) domain. A homomeric c-ring of probably 10 subunits is part of the complex rotary element. The polypeptide is ATP synthase subunit 9, mitochondrial (Rhizopus oryzae (Mucormycosis agent)).